The chain runs to 138 residues: Putative nickel-responsive regulator (138 aa).

Residues histidine 78, histidine 89, histidine 91, and cysteine 97 each contribute to the Ni(2+) site.

Belongs to the transcriptional regulatory CopG/NikR family. Ni(2+) is required as a cofactor.

In terms of biological role, transcriptional regulator. This chain is Putative nickel-responsive regulator, found in Thermococcus onnurineus (strain NA1).